Consider the following 386-residue polypeptide: 1-deoxy-D-xylulose 5-phosphate reductoisomerase (386 aa).

Positions 7, 8, 9, 10, 33, and 124 each coordinate NADPH. Position 125 (Lys-125) interacts with 1-deoxy-D-xylulose 5-phosphate. Glu-126 is an NADPH binding site. Asp-148 contacts Mn(2+). The 1-deoxy-D-xylulose 5-phosphate site is built by Ser-149, Glu-150, Ser-174, and His-197. Position 150 (Glu-150) interacts with Mn(2+). Gly-203 provides a ligand contact to NADPH. 1-deoxy-D-xylulose 5-phosphate-binding residues include Ser-210, Asn-215, Lys-216, and Glu-219. Glu-219 serves as a coordination point for Mn(2+).

It belongs to the DXR family. Mg(2+) is required as a cofactor. Requires Mn(2+) as cofactor.

The catalysed reaction is 2-C-methyl-D-erythritol 4-phosphate + NADP(+) = 1-deoxy-D-xylulose 5-phosphate + NADPH + H(+). It functions in the pathway isoprenoid biosynthesis; isopentenyl diphosphate biosynthesis via DXP pathway; isopentenyl diphosphate from 1-deoxy-D-xylulose 5-phosphate: step 1/6. In terms of biological role, catalyzes the NADPH-dependent rearrangement and reduction of 1-deoxy-D-xylulose-5-phosphate (DXP) to 2-C-methyl-D-erythritol 4-phosphate (MEP). The chain is 1-deoxy-D-xylulose 5-phosphate reductoisomerase from Kitasatospora griseola (Streptomyces griseolosporeus).